A 314-amino-acid chain; its full sequence is Cytochrome c biogenesis protein CcsA (314 aa).

8 helical membrane-spanning segments follow: residues 15-35 (VSFI…ISLI), 48-68 (LITI…WIIS), 73-93 (ISNL…GQLL), 102-122 (IIPA…CFVL), 148-168 (VMLS…VLFI), 216-236 (SILV…IWAN), 250-267 (TWAF…HMRI), and 277-297 (ALLA…VNFL).

Belongs to the CcmF/CycK/Ccl1/NrfE/CcsA family. In terms of assembly, may interact with ccs1.

The protein resides in the cellular thylakoid membrane. In terms of biological role, required during biogenesis of c-type cytochromes (cytochrome c6 and cytochrome f) at the step of heme attachment. The polypeptide is Cytochrome c biogenesis protein CcsA (Prochlorococcus marinus subsp. pastoris (strain CCMP1986 / NIES-2087 / MED4)).